Reading from the N-terminus, the 854-residue chain is Disrupted in schizophrenia 1 protein (854 aa).

Residues 1–18 (MPGGGPQGAPAAAGGGGV) show a composition bias toward gly residues. Disordered regions lie at residues 1-24 (MPGGGPQGAPAAAGGGGVSHRAGS), 179-205 (SAELSSNSCSPGCGPEVPPTPPGSHSA), 221-257 (GERGEAEGCPPSREAESHCQSPQEMGAKAASLDGPHE), and 278-323 (AQAA…SGDA). Residues 1–292 (MPGGGPQGAP…NSSRPERDMH (292 aa)) are interaction with MAP1A. Residues 197–203 (PTPPGSH) carry the Interaction with FBXW7 motif. Over residues 285 to 295 (SRPERDMHSLP) the composition is skewed to basic and acidic residues. The interval 293–696 (SLPDMDPGSS…LGKVWEADLE (404 aa)) is interaction with TRAF3IP1. A compositionally biased stretch (low complexity) spans 296-309 (DMDPGSSSSLDPSL). Coiled-coil stretches lie at residues 366-394 (ENDDYDKAETLQQRLEDLEQEKISLHFQL), 452-505 (ITRR…CDLT), and 602-666 (WTAK…SVKE). K372 is covalently cross-linked (Glycyl lysine isopeptide (Lys-Gly) (interchain with G-Cter in ubiquitin)). Residues 440–597 (LEPTAQDSLH…LLEAKMHAIS (158 aa)) are required for localization to punctate cytoplasmic foci. Residues 446-854 (DSLHVSITRR…MTAGVHEAQA (409 aa)) form a necessary and sufficient for interaction with PCNT and localization at the centrosome region. The tract at residues 598 to 854 (GNHFWTAKDL…MTAGVHEAQA (257 aa)) is interaction with ATF4 and ATF5. The interval 716–739 (VEDERQMDDLEGAAPPIPPRLHSE) is disordered. Residues 727–854 (GAAPPIPPRL…MTAGVHEAQA (128 aa)) are interaction with PAFAH1B1. Positions 802 to 830 (SHDEDLIQSLRRELQMVKETLQAMILQLQ) form a coiled coil. Residues 802-835 (SHDEDLIQSLRRELQMVKETLQAMILQLQPAKEA) form an interaction with NDEL1 region.

In terms of assembly, interacts with NDEL1. Interacts with CCDC88A (via C-terminus); the interaction is direct. Interacts with GSK3B. Interacts with tubulin alpha, ACTN2, ANKHD1, ATF4, ATF5, CEP63, EIF3S3, MAP1A, NDEL1, PAFAH1B1, RANBP9, SPTBN4, SYNE1 and TRAF3IP1. Interaction with microtubules may be mediated in part by TRAF3IP1. Interacts (via C-terminal) with PCNT. Interacts with CHCHD6. Interacts with CCDC141. Interacts with FBXW7, the substrate-recognition component of a SCF (SKP1-CUL1-F-box protein) E3 ubiquitin-protein ligase complex; the interaction targets DISC1 for proteasomal degradation. Interacts with ZNF365. Interacts with ATF4; inhibiting ATF4 transcription factor activity by disrupting ATF4 dimerization and DNA-binding. Interacts with PDE4B (isoform PDE4B5). Post-translationally, ubiquitinated. Ubiquitination with 'Lys-48'-linked polyubiquitin chains leads to its proteasomal degradation. In terms of tissue distribution, ubiquitous. Highly expressed in the dentate gyrus of the hippocampus. Also expressed in the temporal and parahippocampal cortices and cells of the white matter.

The protein localises to the cytoplasm. The protein resides in the cytoskeleton. It localises to the mitochondrion. Its subcellular location is the microtubule organizing center. It is found in the centrosome. The protein localises to the postsynaptic density. In terms of biological role, involved in the regulation of multiple aspects of embryonic and adult neurogenesis. Required for neural progenitor proliferation in the ventrical/subventrical zone during embryonic brain development and in the adult dentate gyrus of the hippocampus. Participates in the Wnt-mediated neural progenitor proliferation as a positive regulator by modulating GSK3B activity and CTNNB1 abundance. Plays a role as a modulator of the AKT-mTOR signaling pathway controlling the tempo of the process of newborn neurons integration during adult neurogenesis, including neuron positioning, dendritic development and synapse formation. Inhibits the activation of AKT-mTOR signaling upon interaction with CCDC88A. Regulates the migration of early-born granule cell precursors toward the dentate gyrus during the hippocampal development. Inhibits ATF4 transcription factor activity in neurons by disrupting ATF4 dimerization and DNA-binding. Plays a role, together with PCNT, in the microtubule network formation. In Homo sapiens (Human), this protein is Disrupted in schizophrenia 1 protein.